The sequence spans 137 residues: Large ribosomal subunit protein uL16 (137 aa).

The protein belongs to the universal ribosomal protein uL16 family. As to quaternary structure, part of the 50S ribosomal subunit.

Binds 23S rRNA and is also seen to make contacts with the A and possibly P site tRNAs. This is Large ribosomal subunit protein uL16 from Nitrobacter winogradskyi (strain ATCC 25391 / DSM 10237 / CIP 104748 / NCIMB 11846 / Nb-255).